The following is a 317-amino-acid chain: ADP-L-glycero-D-manno-heptose-6-epimerase (317 aa).

NADP(+) is bound by residues 10-11, 31-32, Lys38, Lys53, 76-80, and Asn93; these read FI, DD, and QGACS. The active-site Proton acceptor is the Tyr140. Lys144 is a binding site for NADP(+). Asn169 contributes to the substrate binding site. Positions 170 and 178 each coordinate NADP(+). Lys178 functions as the Proton acceptor in the catalytic mechanism. Substrate contacts are provided by residues Ala180, His187, 201 to 204, Arg214, and Tyr278; that span reads FEGC.

The protein belongs to the NAD(P)-dependent epimerase/dehydratase family. HldD subfamily. In terms of assembly, homopentamer. NADP(+) serves as cofactor.

It carries out the reaction ADP-D-glycero-beta-D-manno-heptose = ADP-L-glycero-beta-D-manno-heptose. The protein operates within nucleotide-sugar biosynthesis; ADP-L-glycero-beta-D-manno-heptose biosynthesis; ADP-L-glycero-beta-D-manno-heptose from D-glycero-beta-D-manno-heptose 7-phosphate: step 4/4. Catalyzes the interconversion between ADP-D-glycero-beta-D-manno-heptose and ADP-L-glycero-beta-D-manno-heptose via an epimerization at carbon 6 of the heptose. In Nitrosococcus oceani (strain ATCC 19707 / BCRC 17464 / JCM 30415 / NCIMB 11848 / C-107), this protein is ADP-L-glycero-D-manno-heptose-6-epimerase.